Consider the following 653-residue polypeptide: Bifunctional lysine-specific demethylase and histidyl-hydroxylase NO66 (653 aa).

Low complexity predominate over residues 1-12 (MKKATTSAAAKS). Disordered stretches follow at residues 1–50 (MKKA…DMLA) and 65–137 (FDDD…LERT). Over residues 13–26 (QGNSKMQKNANNGT) the composition is skewed to polar residues. The residue at position 44 (S44) is a Phosphoserine. Low complexity predominate over residues 72 to 86 (STSKKTQSGSAAAAK). The residue at position 131 (S131) is a Phosphoserine. The residue at position 137 (T137) is a Phosphothreonine. Residue S138 is modified to Phosphoserine. The tract at residues 184 to 208 (AEPTEEGNNNNDEKETETIETHKAD) is disordered. Residues 194 to 208 (NDEKETETIETHKAD) are compositionally biased toward basic and acidic residues. In terms of domain architecture, JmjC spans 300 to 450 (FYSDGCSIRL…NLLETLMPMV (151 aa)). Residues H351, D353, and H416 each coordinate Fe cation.

Belongs to the ROX family. NO66 subfamily. The cofactor is Fe(2+).

It is found in the nucleus. It carries out the reaction N(6),N(6)-dimethyl-L-lysyl(36)-[histone H3] + 2 2-oxoglutarate + 2 O2 = L-lysyl(36)-[histone H3] + 2 formaldehyde + 2 succinate + 2 CO2. In terms of biological role, oxygenase that can act as both a histone lysine demethylase and a ribosomal histidine hydroxylase. Specifically demethylates 'Lys-4' (H3K4me) and 'Lys-36' (H3K36me) of histone H3, thereby playing a central role in histone code. This chain is Bifunctional lysine-specific demethylase and histidyl-hydroxylase NO66, found in Drosophila melanogaster (Fruit fly).